A 226-amino-acid chain; its full sequence is MTTTELVALLHLASPALPIGAFSYSQGLEAALDANLIHDADSARNWIASGLTDVLAHGELPFLAHQLARWQAHDAPALAAENAWFVASRESSELRRETEQMGWSLAQLCASLEWGDAARRATLASLQPIALPTAFAYAAAAHDAGADAVLAAYAFGWVENQTAAALKAVPLGQLAGQRIIVALRDAIDAAVRRALATPADAVNTFAPQLGILSARHETQYSRLFRS.

It belongs to the UreF family. In terms of assembly, ureD, UreF and UreG form a complex that acts as a GTP-hydrolysis-dependent molecular chaperone, activating the urease apoprotein by helping to assemble the nickel containing metallocenter of UreC. The UreE protein probably delivers the nickel.

It is found in the cytoplasm. Its function is as follows. Required for maturation of urease via the functional incorporation of the urease nickel metallocenter. In Burkholderia multivorans (strain ATCC 17616 / 249), this protein is Urease accessory protein UreF.